We begin with the raw amino-acid sequence, 102 residues long: MSSTKASGSVKNSAASAPGGPKSQIRRRAAVEKNTKESNSGPAGARAAGAPGSTPTLLKLYTDEASGFKVDPVVVMVLSVGFIASVFLLHIVARILKKFASE.

The span at 1–15 shows a compositional bias: polar residues; the sequence is MSSTKASGSVKNSAA. A disordered region spans residues 1–53; the sequence is MSSTKASGSVKNSAASAPGGPKSQIRRRAAVEKNTKESNSGPAGARAAGAPGS. Residues 1–72 lie on the Cytoplasmic side of the membrane; the sequence is MSSTKASGSV…DEASGFKVDP (72 aa). The span at 41-52 shows a compositional bias: low complexity; sequence GPAGARAAGAPG. Residues 73–93 form a helical membrane-spanning segment; it reads VVVMVLSVGFIASVFLLHIVA.

This sequence belongs to the SEC61-beta family. In terms of assembly, heterotrimeric complex composed of SEC61, SBH1 and SSS1.

The protein resides in the endoplasmic reticulum membrane. Functionally, necessary for protein translocation in the endoplasmic reticulum. In Schizosaccharomyces pombe (strain 972 / ATCC 24843) (Fission yeast), this protein is Protein transport protein sec61 subunit beta (sbh1).